Here is a 291-residue protein sequence, read N- to C-terminus: Porphobilinogen deaminase (291 aa).

Position 237 is an S-(dipyrrolylmethanemethyl)cysteine (Cys-237).

Belongs to the HMBS family. As to quaternary structure, monomer. The cofactor is dipyrromethane.

It carries out the reaction 4 porphobilinogen + H2O = hydroxymethylbilane + 4 NH4(+). It participates in porphyrin-containing compound metabolism; protoporphyrin-IX biosynthesis; coproporphyrinogen-III from 5-aminolevulinate: step 2/4. In terms of biological role, tetrapolymerization of the monopyrrole PBG into the hydroxymethylbilane pre-uroporphyrinogen in several discrete steps. The sequence is that of Porphobilinogen deaminase from Clostridium acetobutylicum (strain ATCC 824 / DSM 792 / JCM 1419 / IAM 19013 / LMG 5710 / NBRC 13948 / NRRL B-527 / VKM B-1787 / 2291 / W).